The primary structure comprises 256 residues: Phosphate import ATP-binding protein PstB (256 aa).

Residues Ile10–Ile251 form the ABC transporter domain. Residue Gly42–Ser49 coordinates ATP.

Belongs to the ABC transporter superfamily. Phosphate importer (TC 3.A.1.7) family. The complex is composed of two ATP-binding proteins (PstB), two transmembrane proteins (PstC and PstA) and a solute-binding protein (PstS).

It localises to the cell inner membrane. It catalyses the reaction phosphate(out) + ATP + H2O = ADP + 2 phosphate(in) + H(+). In terms of biological role, part of the ABC transporter complex PstSACB involved in phosphate import. Responsible for energy coupling to the transport system. The chain is Phosphate import ATP-binding protein PstB from Syntrophus aciditrophicus (strain SB).